The following is a 231-amino-acid chain: Phosphatidylserine decarboxylase proenzyme (231 aa).

Catalysis depends on Ser-200, which acts as the Schiff-base intermediate with substrate; via pyruvic acid. Ser-200 carries the post-translational modification Pyruvic acid (Ser); by autocatalysis.

The protein belongs to the phosphatidylserine decarboxylase family. PSD-A subfamily. Heterodimer of a large membrane-associated beta subunit and a small pyruvoyl-containing alpha subunit. Pyruvate serves as cofactor. Is synthesized initially as an inactive proenzyme. Formation of the active enzyme involves a self-maturation process in which the active site pyruvoyl group is generated from an internal serine residue via an autocatalytic post-translational modification. Two non-identical subunits are generated from the proenzyme in this reaction, and the pyruvate is formed at the N-terminus of the alpha chain, which is derived from the carboxyl end of the proenzyme. The post-translation cleavage follows an unusual pathway, termed non-hydrolytic serinolysis, in which the side chain hydroxyl group of the serine supplies its oxygen atom to form the C-terminus of the beta chain, while the remainder of the serine residue undergoes an oxidative deamination to produce ammonia and the pyruvoyl prosthetic group on the alpha chain.

It is found in the cell membrane. The catalysed reaction is a 1,2-diacyl-sn-glycero-3-phospho-L-serine + H(+) = a 1,2-diacyl-sn-glycero-3-phosphoethanolamine + CO2. Its pathway is phospholipid metabolism; phosphatidylethanolamine biosynthesis; phosphatidylethanolamine from CDP-diacylglycerol: step 2/2. Functionally, catalyzes the formation of phosphatidylethanolamine (PtdEtn) from phosphatidylserine (PtdSer). The chain is Phosphatidylserine decarboxylase proenzyme from Mycobacterium tuberculosis (strain ATCC 25177 / H37Ra).